A 700-amino-acid chain; its full sequence is DNA ligase (700 aa).

Residues 42–46, 91–92, and glutamate 126 contribute to the NAD(+) site; these read DDEYD and SL. Lysine 128 acts as the N6-AMP-lysine intermediate in catalysis. NAD(+) is bound by residues arginine 149, glutamate 184, lysine 300, and lysine 324. Positions 418, 421, 436, and 441 each coordinate Zn(2+). The region spanning 598–686 is the BRCT domain; it reads TRTDQLSGLN…GLGERGVAED (89 aa).

It belongs to the NAD-dependent DNA ligase family. LigA subfamily. Mn(2+) is required as a cofactor.

It catalyses the reaction NAD(+) + (deoxyribonucleotide)n-3'-hydroxyl + 5'-phospho-(deoxyribonucleotide)m = (deoxyribonucleotide)n+m + AMP + beta-nicotinamide D-nucleotide.. In terms of biological role, DNA ligase that catalyzes the formation of phosphodiester linkages between 5'-phosphoryl and 3'-hydroxyl groups in double-stranded DNA using NAD as a coenzyme and as the energy source for the reaction. It is essential for DNA replication and repair of damaged DNA. The sequence is that of DNA ligase from Deinococcus radiodurans (strain ATCC 13939 / DSM 20539 / JCM 16871 / CCUG 27074 / LMG 4051 / NBRC 15346 / NCIMB 9279 / VKM B-1422 / R1).